Here is a 98-residue protein sequence, read N- to C-terminus: Peptides MS9.1 (98 aa).

Positions 1-21 are cleaved as a signal peptide; it reads MKQSLILAVLCLALVFATIEA. A propeptide spanning residues 22-27 is cleaved from the precursor; it reads KPKADP. 2 cysteine pairs are disulfide-bonded: cysteine 34-cysteine 46 and cysteine 37-cysteine 52. Propeptides lie at residues 63–64 and 92–98; these read DP and DPVRDAE.

The protein belongs to the sea anemone BBH family.

It is found in the secreted. The protein localises to the nematocyst. Its function is as follows. Acts as a positive modulator of mammalian TRPA1, a non-selective cation channel involved in detection of pain, in vitro yet has an analgesic and anti-inflammatory effect in vivo. This chain is Peptides MS9.1, found in Metridium senile (Brown sea anemone).